The following is a 504-amino-acid chain: Sodium-coupled neutral amino acid transporter 3 (504 aa).

Asn74 carries an N-linked (GlcNAc...) asparagine glycan. 5 helical membrane-spanning segments follow: residues 83 to 103, 106 to 126, 144 to 164, 187 to 207, and 213 to 233; these read GILG…LFLL, VALL…VVGI, AAAL…LYII, MNGN…LALM, and LGYS…AVIY. Residues Cys240 and Cys275 are joined by a disulfide bond. N-linked (GlcNAc...) asparagine glycans are attached at residues Asn247, Asn248, Asn252, and Asn323. 5 helical membrane passes run 324–344, 366–386, 408–428, 431–451, and 471–491; these read LSIA…YLTF, ILCV…IVLF, VLIA…APNI, IFGV…PAIF, and ALCF…FIII.

The protein belongs to the amino acid/polyamine transporter 2 family.

The protein resides in the cell membrane. Its subcellular location is the basolateral cell membrane. The catalysed reaction is L-glutamine(out) + Na(+)(out) + H(+)(in) = L-glutamine(in) + Na(+)(in) + H(+)(out). The enzyme catalyses L-asparagine(out) + Na(+)(out) + H(+)(in) = L-asparagine(in) + Na(+)(in) + H(+)(out). It carries out the reaction L-histidine(out) + Na(+)(out) + H(+)(in) = L-histidine(in) + Na(+)(in) + H(+)(out). Functionally, symporter that cotransports specific neutral amino acids and sodium ions, coupled to an H(+) antiporter activity. Mainly participates in the glutamate-GABA-glutamine cycle in brain where it transports L-glutamine from astrocytes in the intercellular space for the replenishment of both neurotransmitters glutamate and gamma-aminobutyric acid (GABA) in neurons and also functions as the major influx transporter in ganglion cells mediating the uptake of glutamine. The transport activity is specific for L-glutamine, L-histidine and L-asparagine. The transport is electroneutral coupled to the cotransport of 1 Na(+) and the antiport of 1 H(+). The transport is pH dependent, saturable, Li(+) tolerant and functions in both direction depending on the concentration gradients of its substrates and cotransported ions. Also mediates an amino acid-gated H(+) conductance that is not stoichiometrically coupled to the amino acid transport but which influences the ionic gradients that drive the amino acid transport. In addition, may play a role in nitrogen metabolism, amino acid homeostasis, glucose metabolism and renal ammoniagenesis. The protein is Sodium-coupled neutral amino acid transporter 3 of Homo sapiens (Human).